Here is a 468-residue protein sequence, read N- to C-terminus: Uronate isomerase (468 aa).

The protein belongs to the metallo-dependent hydrolases superfamily. Uronate isomerase family.

It carries out the reaction D-glucuronate = D-fructuronate. The enzyme catalyses aldehydo-D-galacturonate = keto-D-tagaturonate. The protein operates within carbohydrate metabolism; pentose and glucuronate interconversion. The polypeptide is Uronate isomerase (Phocaeicola vulgatus (strain ATCC 8482 / DSM 1447 / JCM 5826 / CCUG 4940 / NBRC 14291 / NCTC 11154) (Bacteroides vulgatus)).